Here is an 808-residue protein sequence, read N- to C-terminus: Anaphase-promoting complex subunit 4 (808 aa).

Tyrosine 469 carries the phosphotyrosine modification. Residues serine 757 and serine 758 each carry the phosphoserine modification. Lysine 772 is covalently cross-linked (Glycyl lysine isopeptide (Lys-Gly) (interchain with G-Cter in SUMO2)). A phosphoserine mark is found at serine 777 and serine 779. Residue lysine 798 forms a Glycyl lysine isopeptide (Lys-Gly) (interchain with G-Cter in SUMO2) linkage.

Belongs to the APC4 family. As to quaternary structure, the mammalian APC/C is composed at least of 14 distinct subunits ANAPC1, ANAPC2, CDC27/APC3, ANAPC4, ANAPC5, CDC16/APC6, ANAPC7, CDC23/APC8, ANAPC10, ANAPC11, CDC26/APC12, ANAPC13, ANAPC15 and ANAPC16 that assemble into a complex of at least 19 chains with a combined molecular mass of around 1.2 MDa; APC/C interacts with FZR1 and FBXO5. In the context of the APC/C complex, directly interacts with UBE2S. Interacts with FBXO43.

The protein localises to the nucleus. The protein operates within protein modification; protein ubiquitination. Functionally, component of the anaphase promoting complex/cyclosome (APC/C), a cell cycle-regulated E3 ubiquitin ligase that controls progression through mitosis and the G1 phase of the cell cycle. The APC/C complex acts by mediating ubiquitination and subsequent degradation of target proteins: it mainly mediates the formation of 'Lys-11'-linked polyubiquitin chains and, to a lower extent, the formation of 'Lys-48'- and 'Lys-63'-linked polyubiquitin chains. The APC/C complex catalyzes assembly of branched 'Lys-11'-/'Lys-48'-linked branched ubiquitin chains on target proteins. The protein is Anaphase-promoting complex subunit 4 (ANAPC4) of Homo sapiens (Human).